The primary structure comprises 217 residues: Protein GrpE (217 aa).

The protein belongs to the GrpE family. In terms of assembly, homodimer.

Its subcellular location is the cytoplasm. Participates actively in the response to hyperosmotic and heat shock by preventing the aggregation of stress-denatured proteins, in association with DnaK and GrpE. It is the nucleotide exchange factor for DnaK and may function as a thermosensor. Unfolded proteins bind initially to DnaJ; upon interaction with the DnaJ-bound protein, DnaK hydrolyzes its bound ATP, resulting in the formation of a stable complex. GrpE releases ADP from DnaK; ATP binding to DnaK triggers the release of the substrate protein, thus completing the reaction cycle. Several rounds of ATP-dependent interactions between DnaJ, DnaK and GrpE are required for fully efficient folding. This Mycoplasma genitalium (strain ATCC 33530 / DSM 19775 / NCTC 10195 / G37) (Mycoplasmoides genitalium) protein is Protein GrpE.